A 337-amino-acid polypeptide reads, in one-letter code: Beta-glucosidase-like protein NCA3, mitochondrial (337 aa).

Low complexity predominate over residues 57–67; the sequence is ESAATTTTLSS. The disordered stretch occupies residues 57 to 84; the sequence is ESAATTTTLSSSEKDTSEQKRDGGFQDG. Over residues 68–80 the composition is skewed to basic and acidic residues; sequence SEKDTSEQKRDGG.

The protein belongs to the SUN family.

The protein resides in the mitochondrion. Its function is as follows. Involved in the mitochondrial expression of subunits 6 and 8 of the F0-F1 ATP synthase. The protein is Beta-glucosidase-like protein NCA3, mitochondrial (NCA3) of Saccharomyces cerevisiae (strain ATCC 204508 / S288c) (Baker's yeast).